Reading from the N-terminus, the 233-residue chain is Chromosome partition protein MukE (233 aa).

A disordered region spans residues 207-233; it reads SLSLHDESDDADVTMGNAADSVEDEQE.

It belongs to the MukE family. As to quaternary structure, interacts, and probably forms a ternary complex, with MukF and MukB. The complex formation is stimulated by calcium or magnesium.

The protein resides in the cytoplasm. It is found in the nucleoid. Its function is as follows. Involved in chromosome condensation, segregation and cell cycle progression. May participate in facilitating chromosome segregation by condensation DNA from both sides of a centrally located replisome during cell division. Probably acts via its interaction with MukB and MukF. This chain is Chromosome partition protein MukE, found in Yersinia pestis.